Consider the following 235-residue polypeptide: Pyridoxine 5'-phosphate synthase (235 aa).

Position 6 (Asn6) interacts with 3-amino-2-oxopropyl phosphate. 8-9 contributes to the 1-deoxy-D-xylulose 5-phosphate binding site; it reads DH. Position 17 (Arg17) interacts with 3-amino-2-oxopropyl phosphate. His42 (proton acceptor) is an active-site residue. 1-deoxy-D-xylulose 5-phosphate-binding residues include Arg44 and His49. Catalysis depends on Glu69, which acts as the Proton acceptor. Residue Thr99 participates in 1-deoxy-D-xylulose 5-phosphate binding. Catalysis depends on His188, which acts as the Proton donor. Residues Gly189 and 210-211 contribute to the 3-amino-2-oxopropyl phosphate site; that span reads GH.

This sequence belongs to the PNP synthase family. As to quaternary structure, homooctamer; tetramer of dimers.

It localises to the cytoplasm. It carries out the reaction 3-amino-2-oxopropyl phosphate + 1-deoxy-D-xylulose 5-phosphate = pyridoxine 5'-phosphate + phosphate + 2 H2O + H(+). It participates in cofactor biosynthesis; pyridoxine 5'-phosphate biosynthesis; pyridoxine 5'-phosphate from D-erythrose 4-phosphate: step 5/5. Its function is as follows. Catalyzes the complicated ring closure reaction between the two acyclic compounds 1-deoxy-D-xylulose-5-phosphate (DXP) and 3-amino-2-oxopropyl phosphate (1-amino-acetone-3-phosphate or AAP) to form pyridoxine 5'-phosphate (PNP) and inorganic phosphate. The chain is Pyridoxine 5'-phosphate synthase from Wolbachia pipientis subsp. Culex pipiens (strain wPip).